Reading from the N-terminus, the 43-residue chain is Potassium channel toxin gamma-KTx 4.4 (43 aa).

4 disulfide bridges follow: Cys-5–Cys-23, Cys-11–Cys-34, Cys-20–Cys-39, and Cys-24–Cys-41.

This sequence belongs to the ergtoxin family. Gamma-KTx 4 subfamily. As to expression, expressed by the venom gland.

It localises to the secreted. Its function is as follows. Reversibly blocks Kv11/ERG potassium channels. The chain is Potassium channel toxin gamma-KTx 4.4 from Centruroides exilicauda (Bark scorpion).